Reading from the N-terminus, the 203-residue chain is NAD(P)H dehydrogenase (quinone) (203 aa).

In terms of domain architecture, Flavodoxin-like spans 3 to 194 (VLIAYYSMYG…AAARYQGKHV (192 aa)). Residues 9–14 (SMYGHI) and 82–84 (TRF) each bind FMN. Tyr-11 is an NAD(+) binding site. Substrate is bound at residue Trp-102. FMN contacts are provided by residues 117–123 (SSATQHG) and His-138.

This sequence belongs to the WrbA family. FMN serves as cofactor.

It carries out the reaction a quinone + NADH + H(+) = a quinol + NAD(+). The catalysed reaction is a quinone + NADPH + H(+) = a quinol + NADP(+). The chain is NAD(P)H dehydrogenase (quinone) from Geotalea uraniireducens (strain Rf4) (Geobacter uraniireducens).